A 222-amino-acid polypeptide reads, in one-letter code: Putative thymidylate synthase (222 aa).

Cys139 is a catalytic residue.

It belongs to the thymidylate synthase family. Archaeal-type ThyA subfamily. As to quaternary structure, monomer.

The protein resides in the cytoplasm. The protein operates within pyrimidine metabolism; dTTP biosynthesis. Its function is as follows. May catalyze the biosynthesis of dTMP using an unknown cosubstrate. In Methanocaldococcus jannaschii (strain ATCC 43067 / DSM 2661 / JAL-1 / JCM 10045 / NBRC 100440) (Methanococcus jannaschii), this protein is Putative thymidylate synthase.